We begin with the raw amino-acid sequence, 339 residues long: Heat-inducible transcription repressor HrcA (339 aa).

It belongs to the HrcA family.

Its function is as follows. Negative regulator of class I heat shock genes (grpE-dnaK-dnaJ and groELS operons). Prevents heat-shock induction of these operons. This is Heat-inducible transcription repressor HrcA from Clostridium perfringens (strain 13 / Type A).